The sequence spans 381 residues: Pectin lyase 1 (381 aa).

The first 20 residues, 1-20 (MKYASFIAAAAAALASAVSA), serve as a signal peptide directing secretion. 2 disulfides stabilise this stretch: C83–C102 and C92–C227. The N-linked (GlcNAc...) asparagine glycan is linked to N130. R257 is an active-site residue. C324 and C332 are disulfide-bonded.

The protein belongs to the polysaccharide lyase 1 family.

It localises to the secreted. The enzyme catalyses Eliminative cleavage of (1-&gt;4)-alpha-D-galacturonan methyl ester to give oligosaccharides with 4-deoxy-6-O-methyl-alpha-D-galact-4-enuronosyl groups at their non-reducing ends.. Pectinolytic enzymes consist of four classes of enzymes: pectin lyase, polygalacturonase, pectin methylesterase and rhamnogalacturonase. Among pectinolytic enzymes, pectin lyase is the most important in depolymerization of pectin, since it cleaves internal glycosidic bonds of highly methylated pectins. This Aspergillus oryzae (strain ATCC 42149 / RIB 40) (Yellow koji mold) protein is Pectin lyase 1 (pel1).